The following is a 23-amino-acid chain: Aurein-4.4 (23 aa).

Belongs to the frog skin active peptide (FSAP) family. Aurein subfamily. Expressed by the skin dorsal glands.

The protein localises to the secreted. Functionally, has no antimicrobial or anticancer activity. In Ranoidea aurea (Green and golden bell frog), this protein is Aurein-4.4.